We begin with the raw amino-acid sequence, 42 residues long: Pollen allergen Sal k 1 (42 aa).

The protein is Pollen allergen Sal k 1 of Kali turgidum (Prickly saltwort).